The sequence spans 565 residues: NAD-dependent malic enzyme (565 aa).

Catalysis depends on Tyr104, which acts as the Proton donor. Position 157 (Arg157) interacts with NAD(+). The Proton acceptor role is filled by Lys175. A divalent metal cation is bound by residues Glu246, Asp247, and Asp270. Residues Asp270 and Asn418 each coordinate NAD(+).

Belongs to the malic enzymes family. As to quaternary structure, homotetramer. The cofactor is Mg(2+). Requires Mn(2+) as cofactor.

It carries out the reaction (S)-malate + NAD(+) = pyruvate + CO2 + NADH. It catalyses the reaction oxaloacetate + H(+) = pyruvate + CO2. This is NAD-dependent malic enzyme from Salmonella dublin (strain CT_02021853).